The primary structure comprises 864 residues: DNA mismatch repair protein MutS (864 aa).

Residue G607–S614 participates in ATP binding.

Belongs to the DNA mismatch repair MutS family.

Functionally, this protein is involved in the repair of mismatches in DNA. It is possible that it carries out the mismatch recognition step. This protein has a weak ATPase activity. In Neisseria meningitidis serogroup C / serotype 2a (strain ATCC 700532 / DSM 15464 / FAM18), this protein is DNA mismatch repair protein MutS.